Consider the following 795-residue polypeptide: Mitochondrial inner membrane m-AAA protease component paraplegin (795 aa).

The N-terminal 43 residues, 1-43 (MAVLLLLLRALRRGPGPGPRPLWGPGPAWSPGFPARPGRGRPY), are a transit peptide targeting the mitochondrion. Positions 44–105 (MASRPPGDLA…GGTFYFNTSR (62 aa)) are cleaved as a propeptide — removed in mature form. Topologically, residues 106 to 144 (LKQKNKEKDKSKGKAPEEDEEERRRRERDDQMYRERLRT) are mitochondrial matrix. The tract at residues 108–133 (QKNKEKDKSKGKAPEEDEEERRRRER) is disordered. The segment covering 109 to 133 (KNKEKDKSKGKAPEEDEEERRRRER) has biased composition (basic and acidic residues). The chain crosses the membrane as a helical span at residues 145–165 (LLVIAVVMSLLNALSTSGGSI). The Mitochondrial intermembrane segment spans residues 166–248 (SWNDFVHEML…DRIPVSYKRT (83 aa)). The helical transmembrane segment at 249 to 269 (GFFGNALYSVGMTAVGLAILW) threads the bilayer. Over 270-795 (YVFRLAGMTG…LGGEEPTWPK (526 aa)) the chain is Mitochondrial matrix. 7 residues coordinate ATP: Ala-312, Gly-352, Cys-353, Gly-354, Lys-355, Thr-356, and Leu-357. Position 505 is a 3'-nitrotyrosine (Tyr-505). Position 574 (His-574) interacts with Zn(2+). Residue Glu-575 is part of the active site. 2 residues coordinate Zn(2+): His-578 and Asp-650. An interaction with PPIF region spans residues 701–795 (HEARLLVAKA…LGGEEPTWPK (95 aa)). Residues 751–795 (PHGPKKMIAPQRWIDAQREKQDLGEEETEETQQPPLGGEEPTWPK) form a disordered region.

This sequence in the N-terminal section; belongs to the AAA ATPase family. In the C-terminal section; belongs to the peptidase M41 family. In terms of assembly, forms heterooligomers with AFG3L2; the m-AAA protease is composed of heterohexamers of AFG3L2 and SPG7. Component of the mitochondrial permeability transition pore complex (mPTPC), at least composed of SPG7, VDAC1 and PPIF. Interacts with MAIP1. Zn(2+) serves as cofactor. Post-translationally, upon import into the mitochondrion, the N-terminal transit peptide is cleaved by the mitochondrial-processing peptidase (MPP) to generate an intermediate form which undergoes a second proteolytic cleavage mediated by proteases AFG3L2 removing an additional N-terminal fragment to generate the proteolytically active mature form. As to expression, ubiquitous.

The protein resides in the mitochondrion inner membrane. It catalyses the reaction ATP + H2O = ADP + phosphate + H(+). Its function is as follows. Catalytic component of the m-AAA protease, a protease that plays a key role in proteostasis of inner mitochondrial membrane proteins, and which is essential for axonal and neuron development. SPG7 possesses both ATPase and protease activities: the ATPase activity is required to unfold substrates, threading them into the internal proteolytic cavity for hydrolysis into small peptide fragments. The m-AAA protease exerts a dual role in the mitochondrial inner membrane: it mediates the processing of specific regulatory proteins and ensures protein quality control by degrading misfolded polypeptides. Mediates protein maturation of the mitochondrial ribosomal subunit MRPL32/bL32m by catalyzing the cleavage of the presequence of MRPL32/bL32m prior to assembly into the mitochondrial ribosome. Acts as a regulator of calcium in neurons by mediating degradation of SMDT1/EMRE before its assembly with the uniporter complex, limiting the availability of SMDT1/EMRE for MCU assembly and promoting efficient assembly of gatekeeper subunits with MCU. Also regulates mitochondrial calcium by catalyzing degradation of MCU. Plays a role in the formation and regulation of the mitochondrial permeability transition pore (mPTP) and its proteolytic activity is dispensable for this function. The protein is Mitochondrial inner membrane m-AAA protease component paraplegin of Homo sapiens (Human).